The chain runs to 1406 residues: Protein FAM135B (1406 aa).

Disordered regions lie at residues 519–548 (WTGQ…DGQA) and 770–820 (SVSA…GDSG). A phosphoserine mark is found at Ser777 and Ser778. Polar residues predominate over residues 804-816 (KSQGSPGSCSQLC).

This sequence belongs to the FAM135 family.

The chain is Protein FAM135B (FAM135B) from Homo sapiens (Human).